The primary structure comprises 749 residues: Triacylglycerol lipase 5 (749 aa).

The short motif at 54 to 59 (HAISYD) is the HXXXXD acyltransferase motif element. The 206-residue stretch at 183–388 (LVLSGGSTFG…DNDMPISRLS (206 aa)) folds into the PNPLA domain. Positions 214 to 218 (GSSAG) match the GXSXG motif. The active-site Nucleophile is serine 216. Residues asparagine 270, asparagine 289, asparagine 297, asparagine 304, and asparagine 321 are each glycosylated (N-linked (GlcNAc...) asparagine). Catalysis depends on aspartate 375, which acts as the Proton acceptor. Residues asparagine 474 and asparagine 589 are each glycosylated (N-linked (GlcNAc...) asparagine). The disordered stretch occupies residues 585–643 (IKSPNKTAAPGRFPLQPLPSPSSTFNKRKMDMLSPSPSPSTSPQRSKSSFTQQGTRQKA). The segment covering 623-633 (PSTSPQRSKSS) has biased composition (low complexity). A compositionally biased stretch (polar residues) spans 634–643 (FTQQGTRQKA). Phosphoserine is present on serine 645. Asparagine 680, asparagine 714, and asparagine 742 each carry an N-linked (GlcNAc...) asparagine glycan.

It localises to the lipid droplet. It carries out the reaction a triacylglycerol + H2O = a diacylglycerol + a fatty acid + H(+). It catalyses the reaction 1-(9Z-octadecenoyl)-sn-glycero-3-phosphate + (9Z)-octadecenoyl-CoA = 1,2-di-(9Z-octadecenoyl)-sn-glycero-3-phosphate + CoA. The catalysed reaction is 1-(9Z-octadecenoyl)-sn-glycero-3-phosphate + hexadecanoyl-CoA = 1-hexadecanoyl-2-(9Z-octadecenoyl)-sn-glycero-3-phosphate + CoA. Its activity is regulated as follows. Loses its lipolytic activity in cells lacking nonpolar lipids, but retains its side activity as lysophospholipid acyltransferase. Functionally, lipid particle-localized triacylglycerol (TAG) lipase. The lipid droplet/particle is a lipid storage compartment which serves as a depot of energy and building blocks for membrane lipid biosynthesis. Involved in the mobilization of the non-polar storage lipids triacylglycerols (TAGs) from lipid particles by hydrolysis of TAGs, releasing and supplying specific fatty acids to the appropriate metabolic pathways. Also catalyzes the acylation of lysophosphatidic acid (LPA). The polypeptide is Triacylglycerol lipase 5 (TGL5) (Saccharomyces cerevisiae (strain ATCC 204508 / S288c) (Baker's yeast)).